Here is a 313-residue protein sequence, read N- to C-terminus: Methionyl-tRNA formyltransferase (313 aa).

113 to 116 (SLLP) provides a ligand contact to (6S)-5,6,7,8-tetrahydrofolate.

Belongs to the Fmt family.

It carries out the reaction L-methionyl-tRNA(fMet) + (6R)-10-formyltetrahydrofolate = N-formyl-L-methionyl-tRNA(fMet) + (6S)-5,6,7,8-tetrahydrofolate + H(+). Its function is as follows. Attaches a formyl group to the free amino group of methionyl-tRNA(fMet). The formyl group appears to play a dual role in the initiator identity of N-formylmethionyl-tRNA by promoting its recognition by IF2 and preventing the misappropriation of this tRNA by the elongation apparatus. This is Methionyl-tRNA formyltransferase from Acidithiobacillus ferrooxidans (strain ATCC 23270 / DSM 14882 / CIP 104768 / NCIMB 8455) (Ferrobacillus ferrooxidans (strain ATCC 23270)).